A 332-amino-acid chain; its full sequence is L-lactate dehydrogenase A chain (332 aa).

NAD(+) is bound by residues 29–57 and arginine 99; that span reads GMVG…MEDK. Residues arginine 106, asparagine 138, and arginine 169 each contribute to the substrate site. Asparagine 138 provides a ligand contact to NAD(+). The Proton acceptor role is filled by histidine 193. A substrate-binding site is contributed by threonine 248.

This sequence belongs to the LDH/MDH superfamily. LDH family. Homotetramer.

The protein resides in the cytoplasm. It carries out the reaction (S)-lactate + NAD(+) = pyruvate + NADH + H(+). The protein operates within fermentation; pyruvate fermentation to lactate; (S)-lactate from pyruvate: step 1/1. In terms of biological role, interconverts simultaneously and stereospecifically pyruvate and lactate with concomitant interconversion of NADH and NAD(+). This Sphyraena argentea (Pacific barracuda) protein is L-lactate dehydrogenase A chain (ldha).